A 96-amino-acid polypeptide reads, in one-letter code: Co-chaperonin GroES (96 aa).

The protein belongs to the GroES chaperonin family. Heptamer of 7 subunits arranged in a ring. Interacts with the chaperonin GroEL.

Its subcellular location is the cytoplasm. Together with the chaperonin GroEL, plays an essential role in assisting protein folding. The GroEL-GroES system forms a nano-cage that allows encapsulation of the non-native substrate proteins and provides a physical environment optimized to promote and accelerate protein folding. GroES binds to the apical surface of the GroEL ring, thereby capping the opening of the GroEL channel. The polypeptide is Co-chaperonin GroES (Methylorubrum populi (strain ATCC BAA-705 / NCIMB 13946 / BJ001) (Methylobacterium populi)).